Consider the following 732-residue polypeptide: Serine/threonine-protein kinase CBK1 (732 aa).

The tract at residues 111-240 (SFDNHLNVDP…STEAANSDMT (130 aa)) is disordered. Polar residues predominate over residues 119–159 (DPNNTERFTSMDSMNFQPPASTFTQLGNGSSTNLSEISSGQ). A compositionally biased stretch (low complexity) spans 160–171 (NSLLSNHSVNNL). Over residues 172–183 (PTALTSDTSPPV) the composition is skewed to polar residues. Residues 185-221 (QHPQFQPQQQQQQQQPQQQQIFQQQQQQQQQQQQPQQ) show a composition bias toward low complexity. Positions 222 to 240 (SRAVVNQSVSTEAANSDMT) are enriched in polar residues. A coiled-coil region spans residues 281-310 (HAIERNQRRLELENKIANEDIGSSEERKNR). The region spanning 335 to 647 (FHTVKVIGKG…AEEIKQHPFF (313 aa)) is the Protein kinase domain. ATP is bound by residues 341–349 (IGKGAFGEV) and lysine 364. Catalysis depends on aspartate 458, which acts as the Proton acceptor. Residues 648–730 (RGVDWDSIRD…SRFDYLTRKN (83 aa)) form the AGC-kinase C-terminal domain.

It belongs to the protein kinase superfamily. STE Ser/Thr protein kinase family. COT1 subfamily. Interacts with MOB2 and BCR1.

The protein resides in the bud neck. It localises to the cell tip. It carries out the reaction L-seryl-[protein] + ATP = O-phospho-L-seryl-[protein] + ADP + H(+). The enzyme catalyses L-threonyl-[protein] + ATP = O-phospho-L-threonyl-[protein] + ADP + H(+). Its function is as follows. Serine/threonine-protein kinase required for wild-type hyphal growth and transcriptional regulation of cell-wall-associated genes. Involved in the biofilm formation through phosphorylation of the master regulator of biofilm formation BCR1. The protein is Serine/threonine-protein kinase CBK1 (CBK1) of Candida albicans (strain SC5314 / ATCC MYA-2876) (Yeast).